The chain runs to 447 residues: Glycogen synthase (447 aa).

Arg15 serves as a coordination point for ADP-alpha-D-glucose.

Belongs to the glycosyltransferase 1 family. Bacterial/plant glycogen synthase subfamily.

It carries out the reaction [(1-&gt;4)-alpha-D-glucosyl](n) + ADP-alpha-D-glucose = [(1-&gt;4)-alpha-D-glucosyl](n+1) + ADP + H(+). It participates in glycan biosynthesis; glycogen biosynthesis. In terms of biological role, synthesizes alpha-1,4-glucan chains using ADP-glucose. This chain is Glycogen synthase, found in Deinococcus geothermalis (strain DSM 11300 / CIP 105573 / AG-3a).